We begin with the raw amino-acid sequence, 328 residues long: Glucan endo-1,3-beta-glucosidase, basic isoform 3 (328 aa).

The active-site Proton donor is the glutamate 85. The Nucleophile role is filled by glutamate 230. Residues 306–328 (VSERVWDISAETNSTTSSLISEM) constitute a propeptide, removed in mature form. An N-linked (GlcNAc...) asparagine glycan is attached at asparagine 318.

This sequence belongs to the glycosyl hydrolase 17 family.

The protein localises to the vacuole. It carries out the reaction Hydrolysis of (1-&gt;3)-beta-D-glucosidic linkages in (1-&gt;3)-beta-D-glucans.. Functionally, is thought to be an important plant defense-related product against fungal pathogens. This Solanum tuberosum (Potato) protein is Glucan endo-1,3-beta-glucosidase, basic isoform 3 (GLUB3).